A 589-amino-acid polypeptide reads, in one-letter code: MSSISLKENGGEVSVKKDYSNGGGVRDLYGEDSATEDHLITPWTFSVASGCSLLRDPRYNKGLAFTEGERDAHYLRGLLPPSVFNQELQEKRLMHNLRQYEVPLHRYMALMDLQERNERLFYKLLIDNVAELLPVVYTPTVGEACQKYGSIFRRPQGLYISLKEKGKILEVLKNWPEKSIQVIVVTDGERILGLGDLGCQGMGIPVGKLSLYTALGGVRPSSCLPVTIDVGTNNEKLLNDEFYIGLRQRRATGQEYATFLDEFMRAVKQNYGEKVLVQFEDFANHNAFDLLEKYSSSHLVFNDDIQGTASVVLAGLLASLKLVGGTLADHTFLFLGAGEAGTGIAELIAVEVSKQTKAPVEETRKKIWLVDSKGLIVSSRLESLQQFKKPWAHEHEPVKGLLEAVKAIKPTVLIGSSGAGKTFTKEVVETMASLNEKPLILALSNPTSQSECTAEEAYTWSKGRAIFASGSPFDPVEYEGKLFVPGQANNAYIFPGFGLGLIMSGAIRVRDEMLLAASEALAAQVSEENYDKGLIYPPFTNIRKISANIAAKVAAKAYDLGLASHLKRPKDLVKYAESCMYSPGYRSYR.

The Proton donor role is filled by Y137. Residue R190 participates in NAD(+) binding. K208 acts as the Proton acceptor in catalysis. A divalent metal cation-binding residues include E280, D281, and D304. Position 304 (D304) interacts with NAD(+). 333–349 (LFLGAGEAGTGIAELIA) lines the NADP(+) pocket. Residue N445 coordinates NAD(+).

Belongs to the malic enzymes family. In terms of assembly, homotetramer. Mg(2+) serves as cofactor. Requires Mn(2+) as cofactor.

It is found in the cytoplasm. It carries out the reaction (S)-malate + NADP(+) = pyruvate + CO2 + NADPH. The catalysed reaction is oxaloacetate + H(+) = pyruvate + CO2. The protein is NADP-dependent malic enzyme (ME1) of Phaseolus vulgaris (Kidney bean).